The primary structure comprises 686 residues: XK-related protein 5 (686 aa).

Helical transmembrane passes span 33–53, 205–225, 239–259, 265–285, and 297–317; these read LLWG…QALS, HFWV…WLVA, LFNL…WDSP, VTFY…ATDF, and IAGV…YYSL. 3 disordered regions span residues 339–387, 448–468, and 490–592; these read GDKT…PPEA, ALSA…LENS, and FASD…APFP. Residues 340-359 are compositionally biased toward basic and acidic residues; sequence DKTERRDSPRATDLAGKRTE. Composition is skewed to polar residues over residues 450-468 and 490-509; these read SAQQ…LENS and FASD…TQGE. Gly residues predominate over residues 523-536; the sequence is QGKGTGGQQRGGEG. A compositionally biased stretch (polar residues) spans 550–567; the sequence is VATSSQQEGSPATLQTAH.

It belongs to the XK family.

Its subcellular location is the cell membrane. This Homo sapiens (Human) protein is XK-related protein 5.